The primary structure comprises 33 residues: Rhinophrynin-33 (33 aa).

As to expression, expressed by the skin glands.

The protein resides in the secreted. Functionally, non-cytotoxic peptide with immunosuppressive and insulinotropic effects. Induces an increased production of the anti-inflammatory cytokine IL-10 and inhibits production of the pro-inflammatory cytokines TNF-alpha and IL-1beta, when incubated with mouse peritoneal cells. Does not display growth-inhibitory activity against the Gram-positive S.epidermidis and Gram-negative E.coli bacteria and against the opportunistic yeast pathogen C.parapsilosis (MIC&gt;128 uM). In addition, it lacks cytotoxic activity against mouse erythrocytes (LC(50)&gt;500 uM) and A549 human non-small cell lung adenocarcinoma cells (LC(50)&gt;100 uM). Moderately stimulates insulin release from rat clonal beta-cells and mouse pancreatic islets. Non-cytotoxic peptide with immunosuppressive but without insulinotropic effects. Inhibits production of the pro-inflammatory cytokines TNF-alpha, but has no effect on IL-10 and IL-1beta production, when incubated with mouse peritoneal cells. Has no activity of stimulation of insulin release. This chain is Rhinophrynin-33, found in Rhinophrynus dorsalis (Mexican burrowing toad).